A 205-amino-acid polypeptide reads, in one-letter code: MTFPPLKSPLKFYAVVPTADWVGRMVKAGADTVQLRCKALHGDELKREIARCAAACQGSRTQLFINDHWREAIEAGAYGVHLGQEDMDTADLAAIAAAGLRLGLSTHSVAELDRALSVHPSYIASGAIFPTTTKQMPTAPQGLDKLREYVKQAGGTPVVAIGGIDLNNARAVLATGVSSLAAVRAVTEAANPEAVVKAFQALWDG.

4-amino-2-methyl-5-(diphosphooxymethyl)pyrimidine is bound by residues 34 to 38 and Asn66; that span reads QLRCK. Positions 67 and 86 each coordinate Mg(2+). A 4-amino-2-methyl-5-(diphosphooxymethyl)pyrimidine-binding site is contributed by Ser105. 131-133 contributes to the 2-[(2R,5Z)-2-carboxy-4-methylthiazol-5(2H)-ylidene]ethyl phosphate binding site; sequence TTT. Lys134 is a binding site for 4-amino-2-methyl-5-(diphosphooxymethyl)pyrimidine. Residue Gly163 participates in 2-[(2R,5Z)-2-carboxy-4-methylthiazol-5(2H)-ylidene]ethyl phosphate binding.

The protein belongs to the thiamine-phosphate synthase family. Mg(2+) is required as a cofactor.

The catalysed reaction is 2-[(2R,5Z)-2-carboxy-4-methylthiazol-5(2H)-ylidene]ethyl phosphate + 4-amino-2-methyl-5-(diphosphooxymethyl)pyrimidine + 2 H(+) = thiamine phosphate + CO2 + diphosphate. It carries out the reaction 2-(2-carboxy-4-methylthiazol-5-yl)ethyl phosphate + 4-amino-2-methyl-5-(diphosphooxymethyl)pyrimidine + 2 H(+) = thiamine phosphate + CO2 + diphosphate. The enzyme catalyses 4-methyl-5-(2-phosphooxyethyl)-thiazole + 4-amino-2-methyl-5-(diphosphooxymethyl)pyrimidine + H(+) = thiamine phosphate + diphosphate. It participates in cofactor biosynthesis; thiamine diphosphate biosynthesis; thiamine phosphate from 4-amino-2-methyl-5-diphosphomethylpyrimidine and 4-methyl-5-(2-phosphoethyl)-thiazole: step 1/1. In terms of biological role, condenses 4-methyl-5-(beta-hydroxyethyl)thiazole monophosphate (THZ-P) and 2-methyl-4-amino-5-hydroxymethyl pyrimidine pyrophosphate (HMP-PP) to form thiamine monophosphate (TMP). The polypeptide is Thiamine-phosphate synthase (Neisseria meningitidis serogroup B (strain ATCC BAA-335 / MC58)).